Reading from the N-terminus, the 137-residue chain is Large ribosomal subunit protein uL16 (137 aa).

Belongs to the universal ribosomal protein uL16 family. Part of the 50S ribosomal subunit.

Binds 23S rRNA and is also seen to make contacts with the A and possibly P site tRNAs. This chain is Large ribosomal subunit protein uL16, found in Leuconostoc mesenteroides subsp. mesenteroides (strain ATCC 8293 / DSM 20343 / BCRC 11652 / CCM 1803 / JCM 6124 / NCDO 523 / NBRC 100496 / NCIMB 8023 / NCTC 12954 / NRRL B-1118 / 37Y).